Consider the following 235-residue polypeptide: Phosphoribosylaminoimidazole-succinocarboxamide synthase (235 aa).

It belongs to the SAICAR synthetase family.

It catalyses the reaction 5-amino-1-(5-phospho-D-ribosyl)imidazole-4-carboxylate + L-aspartate + ATP = (2S)-2-[5-amino-1-(5-phospho-beta-D-ribosyl)imidazole-4-carboxamido]succinate + ADP + phosphate + 2 H(+). It participates in purine metabolism; IMP biosynthesis via de novo pathway; 5-amino-1-(5-phospho-D-ribosyl)imidazole-4-carboxamide from 5-amino-1-(5-phospho-D-ribosyl)imidazole-4-carboxylate: step 1/2. This chain is Phosphoribosylaminoimidazole-succinocarboxamide synthase, found in Clostridium botulinum (strain Eklund 17B / Type B).